Here is a 765-residue protein sequence, read N- to C-terminus: Protein BCH2 (765 aa).

Positions 1 to 31 (MSFLWGSTKSKKGKNKKAAGSLPSGVVPQQR) are disordered. Residues 735 to 765 (LECLSKNRNEACLAYERPLPDLPSTIKPLAD) are CHS5-binding.

The protein belongs to the CHAPS family. As to quaternary structure, component of the CHS5/6 complex composed of the 4 CHAPS proteins BCH1, BCH2, BUD7, and CHS6 as well as at least CHS5 and GTP-bound ARF1. The complex interacts with the cargo protein CHS3.

The protein localises to the golgi apparatus. Its subcellular location is the trans-Golgi network membrane. In terms of biological role, member of the CHS5-ARF1P-binding proteins (CHAPS) which mediates export of specific cargo proteins, including chitin synthase CHS3. The chain is Protein BCH2 (BCH2) from Saccharomyces cerevisiae (strain ATCC 204508 / S288c) (Baker's yeast).